Reading from the N-terminus, the 356-residue chain is Delta(7)-sterol 5(6)-desaturase (356 aa).

3 helical membrane passes run 87 to 107, 134 to 154, and 171 to 191; these read LTLY…FAGL, QANI…LAEV, and WYDY…IYWI. Positions 179-303 constitute a Fatty acid hydroxylase domain; that stretch reads FFIAFTDLCI…FTTLWDRLGG (125 aa). The Histidine box-1 motif lies at 192 to 196; the sequence is HRGLH. The Histidine box-2 motif lies at 205–209; the sequence is HKPHH. The helical transmembrane segment at 235 to 255 threads the bilayer; it reads YIFPFLFPLSKIASVAFFVFV. The short motif at 280-284 is the Histidine box-3 element; it reads HTMHH.

The protein belongs to the sterol desaturase family. Fe cation is required as a cofactor.

Its subcellular location is the endoplasmic reticulum membrane. It carries out the reaction a Delta(7)-sterol + 2 Fe(II)-[cytochrome b5] + O2 + 2 H(+) = a Delta(5),Delta(7)-sterol + 2 Fe(III)-[cytochrome b5] + 2 H2O. Its pathway is steroid metabolism; ergosterol biosynthesis; ergosterol from zymosterol: step 3/5. Catalyzes the introduction of a C-5 double bond in the B ring of ergosterol. May contribute to the regulation of ergosterol biosynthesis. This is Delta(7)-sterol 5(6)-desaturase (ERG3) from Leptosphaeria maculans (Blackleg fungus).